The following is a 595-amino-acid chain: Protein UL31 (595 aa).

The first 40 residues, 1-40, serve as a signal peptide directing secretion; it reads MGDKPTLVTLLTVAVSSPPPSSPLPLVSFTELLLPPPSVA. The segment at 47-94 is disordered; the sequence is TATSEVGEKTAEQEVAAAGPETRNERRENREDEGGETRTTGTTAVKRS. Residues 68–82 show a composition bias toward basic and acidic residues; that stretch reads TRNERRENREDEGGE.

It belongs to the herpesviridae U10 family. In terms of assembly, interacts with host CGAS.

The protein resides in the host cytoplasm. The protein localises to the host nucleus. Its function is as follows. Plays a role in the inhibition of host innate immune system by targeting host CGAS and promoting dissociation of DNA from CGAS, thereby inhibiting the enzymatic activity of CGAS. This is Protein UL31 (UL31) from Human cytomegalovirus (strain Merlin) (HHV-5).